The sequence spans 89 residues: Small ribosomal subunit protein uS15 (89 aa).

Belongs to the universal ribosomal protein uS15 family. Part of the 30S ribosomal subunit. Forms a bridge to the 50S subunit in the 70S ribosome, contacting the 23S rRNA.

Its function is as follows. One of the primary rRNA binding proteins, it binds directly to 16S rRNA where it helps nucleate assembly of the platform of the 30S subunit by binding and bridging several RNA helices of the 16S rRNA. Forms an intersubunit bridge (bridge B4) with the 23S rRNA of the 50S subunit in the ribosome. This chain is Small ribosomal subunit protein uS15, found in Methylocella silvestris (strain DSM 15510 / CIP 108128 / LMG 27833 / NCIMB 13906 / BL2).